The sequence spans 165 residues: Transmembrane protein 128 (165 aa).

The next 4 membrane-spanning stretches (helical) occupy residues 49-69 (NIHS…VDFF), 81-101 (WFLF…YCIV), 119-139 (LIPI…VALW), and 144-164 (FFTP…TSLL).

The protein localises to the membrane. The sequence is that of Transmembrane protein 128 (TMEM128) from Bos taurus (Bovine).